The following is a 201-amino-acid chain: MAQHDENVVWHAHPVTREAREHLQGHRGAVLWFTGLSGSGKSTVAGALEQALHQLGVSSYLLDGDNVRHGLCRDLGFSDDDRKENIRRVGEVARLMVDAGLVVLTAFISPHRAERQMVRDMLGEGRFIEVFVDTPLAICEARDPKGLYKKARAGELRNFTGIDAEYQVPLHADIHLDGEQLVTHLTRQLLDLLRQQDIIKP.

35-42 (GLSGSGKS) provides a ligand contact to ATP. The Phosphoserine intermediate role is filled by Ser109.

This sequence belongs to the APS kinase family.

It catalyses the reaction adenosine 5'-phosphosulfate + ATP = 3'-phosphoadenylyl sulfate + ADP + H(+). It participates in sulfur metabolism; hydrogen sulfide biosynthesis; sulfite from sulfate: step 2/3. Catalyzes the synthesis of activated sulfate. This Erwinia tasmaniensis (strain DSM 17950 / CFBP 7177 / CIP 109463 / NCPPB 4357 / Et1/99) protein is Adenylyl-sulfate kinase.